The chain runs to 1030 residues: Carbamoyl phosphate synthase arginine-specific large chain (1030 aa).

The tract at residues 1 to 401 is carboxyphosphate synthetic domain; it reads MPKDTSISSI…AIQKAAASLE (401 aa). The ATP site is built by Arg129, Arg169, Gly175, Gly176, Lys208, Ile210, Glu215, Gly241, Val242, His243, Gln284, and Glu298. An ATP-grasp 1 domain is found at 133 to 327; sequence RSLMNELKQP…IAKMAAKLAV (195 aa). Mg(2+) contacts are provided by Gln284, Glu298, and Asn300. Residues Gln284, Glu298, and Asn300 each coordinate Mn(2+). The segment at 402–548 is oligomerization domain; sequence LKNIGTHLPE…YSTYFGETDG (147 aa). Residues 549–928 form a carbamoyl phosphate synthetic domain region; sequence DISRKEKKRA…ALKKIYTRVW (380 aa). The ATP-grasp 2 domain occupies 675-863; it reads YQLLDELGLK…MIPLATRLLA (189 aa). Residues Arg711, Gln748, Val750, Glu754, Gly779, Val780, His781, Ser782, Gln822, and Glu834 each contribute to the ATP site. Gln822, Glu834, and Asn836 together coordinate Mg(2+). Mn(2+) is bound by residues Gln822, Glu834, and Asn836. The region spanning 925 to 1027 is the MGS-like domain; sequence TRVWSQKGSI…KDLYKKEVAS (103 aa). The interval 929–1030 is allosteric domain; sequence SQKGSIYLQN…YKKEVASCTQ (102 aa).

The protein belongs to the CarB family. In terms of assembly, composed of two chains; the small (or glutamine) chain promotes the hydrolysis of glutamine to ammonia, which is used by the large (or ammonia) chain to synthesize carbamoyl phosphate. Tetramer of heterodimers (alpha,beta)4. Mg(2+) serves as cofactor. It depends on Mn(2+) as a cofactor.

It catalyses the reaction hydrogencarbonate + L-glutamine + 2 ATP + H2O = carbamoyl phosphate + L-glutamate + 2 ADP + phosphate + 2 H(+). The enzyme catalyses hydrogencarbonate + NH4(+) + 2 ATP = carbamoyl phosphate + 2 ADP + phosphate + 2 H(+). It participates in amino-acid biosynthesis; L-arginine biosynthesis; carbamoyl phosphate from bicarbonate: step 1/1. Its function is as follows. Large subunit of the glutamine-dependent carbamoyl phosphate synthetase (CPSase). CPSase catalyzes the formation of carbamoyl phosphate from the ammonia moiety of glutamine, carbonate, and phosphate donated by ATP, constituting the first step of the biosynthetic pathway leading to arginine and/or urea. The large subunit (synthetase) binds the substrates ammonia (free or transferred from glutamine from the small subunit), hydrogencarbonate and ATP and carries out an ATP-coupled ligase reaction, activating hydrogencarbonate by forming carboxy phosphate which reacts with ammonia to form carbamoyl phosphate. The protein is Carbamoyl phosphate synthase arginine-specific large chain of Bacillus subtilis (strain 168).